The primary structure comprises 105 residues: uncharacterized protein (105 aa).

This is an uncharacterized protein from Bacillus phage SPbeta (Bacillus phage SPBc2).